Consider the following 407-residue polypeptide: Phosphopentomutase (407 aa).

Asp10, Asp306, His311, Asp347, His348, and His359 together coordinate Mn(2+).

It belongs to the phosphopentomutase family. Mn(2+) is required as a cofactor.

The protein resides in the cytoplasm. The catalysed reaction is 2-deoxy-alpha-D-ribose 1-phosphate = 2-deoxy-D-ribose 5-phosphate. The enzyme catalyses alpha-D-ribose 1-phosphate = D-ribose 5-phosphate. The protein operates within carbohydrate degradation; 2-deoxy-D-ribose 1-phosphate degradation; D-glyceraldehyde 3-phosphate and acetaldehyde from 2-deoxy-alpha-D-ribose 1-phosphate: step 1/2. In terms of biological role, isomerase that catalyzes the conversion of deoxy-ribose 1-phosphate (dRib-1-P) and ribose 1-phosphate (Rib-1-P) to deoxy-ribose 5-phosphate (dRib-5-P) and ribose 5-phosphate (Rib-5-P), respectively. This chain is Phosphopentomutase, found in Pectobacterium atrosepticum (strain SCRI 1043 / ATCC BAA-672) (Erwinia carotovora subsp. atroseptica).